The primary structure comprises 497 residues: MTSLLDKYLRNISGKGQQSLASVAYLAALDHLLHSFPSIGQSIVQELKSQRSRLKMIASENFSSLSVQLAMGNLLTDKYCEGSPFKRFYSCCENVDAIEWECVETAKELFGAESACVQPHSGADANLLAIMSIITQKIQSPAVQRLGYKTINDLPEQEYEALKAEMSQYKCLGPSLNSGGHLTHGTVRINVMSKLMHCLPYEVNLDTELFDYDVIAKIAKEHRPTVLIAGYSSYSRRLNFATLKQIAEDCGAVLWVDMAHFAGLVAGGVFIGEENPIPYADIVTTTTHKTLRGPRGGLVLAKKEYSDTLNKACPLMMGGPLPHVIAAKAVALKEAMTINFRKYAHQVVENARTLAEIFQRNGLRLLTGGTDNHMLIIDLTSLGVPGRIAEDMLTSVGIAVNRNSIPSDASGQWKTSGIRLGTPALTTLGMGSAEMEEVANIIAKVLRNITVRRNAEGSSSKSEGVLSEEIAQEARQRVADLLGRFPLYPEIDLETLV.

(6S)-5,6,7,8-tetrahydrofolate is bound by residues Leu-176 and 180 to 182 (GHL). Lys-289 carries the post-translational modification N6-(pyridoxal phosphate)lysine.

The protein belongs to the SHMT family. In terms of assembly, homodimer. Pyridoxal 5'-phosphate is required as a cofactor.

It localises to the cytoplasm. It catalyses the reaction (6R)-5,10-methylene-5,6,7,8-tetrahydrofolate + glycine + H2O = (6S)-5,6,7,8-tetrahydrofolate + L-serine. Its pathway is one-carbon metabolism; tetrahydrofolate interconversion. The protein operates within amino-acid biosynthesis; glycine biosynthesis; glycine from L-serine: step 1/1. Catalyzes the reversible interconversion of serine and glycine with tetrahydrofolate (THF) serving as the one-carbon carrier. This reaction serves as the major source of one-carbon groups required for the biosynthesis of purines, thymidylate, methionine, and other important biomolecules. Also exhibits THF-independent aldolase activity toward beta-hydroxyamino acids, producing glycine and aldehydes, via a retro-aldol mechanism. The chain is Serine hydroxymethyltransferase from Chlamydia muridarum (strain MoPn / Nigg).